The chain runs to 544 residues: CTP synthase (544 aa).

The segment at 1 to 267 is amidoligase domain; the sequence is MTKFVFVTGG…AQRVLEILNL (267 aa). S13 contacts CTP. S13 lines the UTP pocket. 14-19 lines the ATP pocket; it reads SIGKGI. Y54 serves as a coordination point for L-glutamine. D71 is an ATP binding site. Mg(2+)-binding residues include D71 and E141. CTP-binding positions include 148-150, 188-193, and K224; these read DIE and KTKPTQ. Residues 188–193 and K224 contribute to the UTP site; that span reads KTKPTQ. Residues 292-534 enclose the Glutamine amidotransferase type-1 domain; sequence EIAIVGKYVR…IEAALRSRPQ (243 aa). G354 lines the L-glutamine pocket. The active-site Nucleophile; for glutamine hydrolysis is C381. Residues 382–385, E405, and R462 each bind L-glutamine; that span reads LGMQ. Residues H507 and E509 contribute to the active site.

The protein belongs to the CTP synthase family. In terms of assembly, homotetramer.

It catalyses the reaction UTP + L-glutamine + ATP + H2O = CTP + L-glutamate + ADP + phosphate + 2 H(+). The catalysed reaction is L-glutamine + H2O = L-glutamate + NH4(+). It carries out the reaction UTP + NH4(+) + ATP = CTP + ADP + phosphate + 2 H(+). The protein operates within pyrimidine metabolism; CTP biosynthesis via de novo pathway; CTP from UDP: step 2/2. Allosterically activated by GTP, when glutamine is the substrate; GTP has no effect on the reaction when ammonia is the substrate. The allosteric effector GTP functions by stabilizing the protein conformation that binds the tetrahedral intermediate(s) formed during glutamine hydrolysis. Inhibited by the product CTP, via allosteric rather than competitive inhibition. Catalyzes the ATP-dependent amination of UTP to CTP with either L-glutamine or ammonia as the source of nitrogen. Regulates intracellular CTP levels through interactions with the four ribonucleotide triphosphates. The chain is CTP synthase from Synechococcus sp. (strain JA-2-3B'a(2-13)) (Cyanobacteria bacterium Yellowstone B-Prime).